The primary structure comprises 360 residues: Phenylalanine--tRNA ligase alpha subunit (360 aa).

Glutamate 260 provides a ligand contact to Mg(2+).

It belongs to the class-II aminoacyl-tRNA synthetase family. Phe-tRNA synthetase alpha subunit type 1 subfamily. In terms of assembly, tetramer of two alpha and two beta subunits. The cofactor is Mg(2+).

The protein resides in the cytoplasm. The catalysed reaction is tRNA(Phe) + L-phenylalanine + ATP = L-phenylalanyl-tRNA(Phe) + AMP + diphosphate + H(+). The polypeptide is Phenylalanine--tRNA ligase alpha subunit (Sinorhizobium medicae (strain WSM419) (Ensifer medicae)).